The chain runs to 224 residues: Charged multivesicular body protein 4b (224 aa).

Residues 1–23 (MSVFGKLFGAGGGKAGKGGPTPQ) are disordered. S2 is subject to N-acetylserine. The interval 2–153 (SVFGKLFGAG…EISTAISKPV (152 aa)) is intramolecular interaction with C-terminus. K6 bears the N6-acetyllysine mark. Residues 8 to 19 (FGAGGGKAGKGG) show a composition bias toward gly residues. A coiled-coil region spans residues 23-183 (QEAIQRLRDT…EELDKNLLEI (161 aa)). K114 is modified (N6-acetyllysine). The segment at 154-224 (GFGEEFDEDE…KELENWAGSM (71 aa)) is intramolecular interaction with N-terminus. Phosphoserine occurs at positions 184 and 223. Residues 185–224 (GPETVPLPNVPSVALPSKPAKKKEEEDDDMKELENWAGSM) are disordered.

Belongs to the SNF7 family. As to quaternary structure, probable core component of the endosomal sorting required for transport complex III (ESCRT-III). ESCRT-III components are thought to multimerize to form a flat lattice on the perimeter membrane of the endosome. Several assembly forms of ESCRT-III may exist that interact and act sequentially. Interacts with CHMP6 and CHMP4C. Interacts with PDCD6IP; the interaction is direct. Interacts with VPS4A; the interaction is direct. Interacts with VPS4B; the interaction is direct. Interacts with CHMP7. Interacts with CFTR; the interaction requires misfolded CFTR. Interacts with PTPN23. Interacts with CC2D1B. Post-translationally, ISGylated. Isgylation weakens its interaction with VPS4A.

The protein resides in the cytoplasm. It localises to the cytosol. The protein localises to the late endosome membrane. Its subcellular location is the midbody. It is found in the nucleus envelope. Its function is as follows. Probable core component of the endosomal sorting required for transport complex III (ESCRT-III) which is involved in multivesicular bodies (MVBs) formation and sorting of endosomal cargo proteins into MVBs. MVBs contain intraluminal vesicles (ILVs) that are generated by invagination and scission from the limiting membrane of the endosome and mostly are delivered to lysosomes enabling degradation of membrane proteins, such as stimulated growth factor receptors, lysosomal enzymes and lipids. The MVB pathway appears to require the sequential function of ESCRT-O, -I,-II and -III complexes. ESCRT-III proteins mostly dissociate from the invaginating membrane before the ILV is released. The ESCRT machinery also functions in topologically equivalent membrane fission events, such as the terminal stages of cytokinesis. Together with SPAST, the ESCRT-III complex promotes nuclear envelope sealing and mitotic spindle disassembly during late anaphase. Plays a role in the endosomal sorting pathway. ESCRT-III proteins are believed to mediate the necessary vesicle extrusion and/or membrane fission activities, possibly in conjunction with the AAA ATPase VPS4. When overexpressed, membrane-assembled circular arrays of CHMP4B filaments can promote or stabilize negative curvature and outward budding. CHMP4A/B/C are required for the exosomal release of SDCBP, CD63 and syndecan. Majority of the protein exists in a folded closed conformation. The sequence is that of Charged multivesicular body protein 4b (Chmp4b) from Mus musculus (Mouse).